A 518-amino-acid polypeptide reads, in one-letter code: Light-independent protochlorophyllide reductase subunit B (518 aa).

Aspartate 36 is a binding site for [4Fe-4S] cluster. The active-site Proton donor is aspartate 285. 420–421 (GL) contributes to the substrate binding site.

This sequence belongs to the ChlB/BchB/BchZ family. In terms of assembly, protochlorophyllide reductase is composed of three subunits; BchL, BchN and BchB. Forms a heterotetramer of two BchB and two BchN subunits. [4Fe-4S] cluster serves as cofactor.

The enzyme catalyses chlorophyllide a + oxidized 2[4Fe-4S]-[ferredoxin] + 2 ADP + 2 phosphate = protochlorophyllide a + reduced 2[4Fe-4S]-[ferredoxin] + 2 ATP + 2 H2O. Its pathway is porphyrin-containing compound metabolism; bacteriochlorophyll biosynthesis (light-independent). In terms of biological role, component of the dark-operative protochlorophyllide reductase (DPOR) that uses Mg-ATP and reduced ferredoxin to reduce ring D of protochlorophyllide (Pchlide) to form chlorophyllide a (Chlide). This reaction is light-independent. The NB-protein (BchN-BchB) is the catalytic component of the complex. In Bradyrhizobium sp. (strain ORS 278), this protein is Light-independent protochlorophyllide reductase subunit B.